We begin with the raw amino-acid sequence, 239 residues long: Sensory rhodopsin-2 (239 aa).

The Extracellular portion of the chain corresponds to 1 to 3; sequence MVG. Residues 4 to 25 form a helical membrane-spanning segment; sequence LTTLFWLGAIGMLVGTLAFAWA. The Cytoplasmic portion of the chain corresponds to 26-33; sequence GRDAGSGE. A helical membrane pass occupies residues 34-55; that stretch reads RRYYVTLVGISGIAAVAYVVMA. The Extracellular portion of the chain corresponds to 56–69; that stretch reads LGVGWVPVAERTVF. A helical transmembrane segment spans residues 70 to 91; that stretch reads APRYIDWILTTPLIVYFLGLLA. Topologically, residues 92–94 are cytoplasmic; that stretch reads GLD. The helical transmembrane segment at 95–117 threads the bilayer; it reads SREFGIVITLNTVVMLAGFAGAM. The Extracellular segment spans residues 118–121; the sequence is VPGI. Residues 122–149 form a helical membrane-spanning segment; the sequence is ERYALFGMGAVAFLGLVYYLVGPMTESA. At 150-153 the chain is on the cytoplasmic side; the sequence is SQRS. A helical membrane pass occupies residues 154 to 181; sequence SGIKSLYVRLRNLTVILWAIYPFIWLLG. The Extracellular portion of the chain corresponds to 182–189; that stretch reads PPGVALLT. Residues 190 to 222 form a helical membrane-spanning segment; the sequence is PTVDVALIVYLDLVTKVGFGFIALDAAATLRAE. Lys205 carries the N6-(retinylidene)lysine modification. The Cytoplasmic portion of the chain corresponds to 223 to 239; sequence HGESLAGVDTDAPAVAD.

It belongs to the archaeal/bacterial/fungal opsin family. Homodimer. Interacts with HTR-II.

It localises to the cell membrane. Photophobic photoreceptor responsible for the negative phototaxis. Activates the sensory rhodopsin II transducer (HTR-II) in response to blue light. This is Sensory rhodopsin-2 (sop2) from Natronomonas pharaonis (Natronobacterium pharaonis).